Here is a 488-residue protein sequence, read N- to C-terminus: MEAAMLQPQSVAQAFLNNREFKSDARKAYLFQQMPATPIYSRPGSSCSQPPTLYSNGAHKTTMLDADVYDSHFPSTPPLSTSGSAIGSPKMFDALQTPINPMFSGLDGFPGKDLFDSVETSVLDWSSCASPPMTPVYIASHPLALQQSTSDLVSMTSCPSLSPSPSPAYARSIASEQDVDFCDPRNLTVSTGNPTLAPEFTLSNMGDADVKGANARPTFDFNPAISHDLPSFQNLDDLDSEDDFSNLVNIEATATGETTRPRACTGSSVVSLGHCSFDDELAFDDNDTFSFLPFPSADATTDVDDGHRDKKLKTSPKNDAVVASEPTDDEVEATSAASVSSESTVSSPSDDNSPTVSAPSRRGRKQSLTEDPSKTFVCDLCNRRFRRQEHLKRHYRSLHTQEKPFECNECGKKFSRSDNLAQHARTHSGGAIVMDLIEDHASHFDGSAMPVNAGDEFSYGKVMFQIGSEVSEITEDASDNKKKRKRTD.

2 consecutive C2H2-type zinc fingers follow at residues 376–399 and 405–427; these read FVCD…RSLH and FECN…ARTH.

The protein localises to the nucleus. It localises to the cytoplasm. In terms of biological role, transcription factor that acts as a key downstream transcription factor in the HOG1-MAPK pathway. Plays crucial roles in the regulation of conidiation, virulence and multi-stress responses. Acts as a negative regulator of proteases, lipases, as well as of the red-pigmented oosporein production, and contributes to virulence and growth in response to external pH. Contributes to the ability to infect Rhipicephalus microplus (Acari, Ixodidae) via the cuticle-penetration requiring route involving proteolytic activity at the host cuticle. Does not seem to be involved in subsequent growth and proliferation once the tick cuticle has been breached. In Beauveria bassiana (strain ARSEF 2860) (White muscardine disease fungus), this protein is C2H2-type transcription factor MSN2.